The primary structure comprises 309 residues: tRNA uridine(34) hydroxylase (309 aa).

One can recognise a Rhodanese domain in the interval 130–224 (SDPDTIVIDT…YLEEVPQEES (95 aa)). Cysteine 184 (cysteine persulfide intermediate) is an active-site residue.

Belongs to the TrhO family.

The catalysed reaction is uridine(34) in tRNA + AH2 + O2 = 5-hydroxyuridine(34) in tRNA + A + H2O. Catalyzes oxygen-dependent 5-hydroxyuridine (ho5U) modification at position 34 in tRNAs. This is tRNA uridine(34) hydroxylase from Rhizobium leguminosarum bv. trifolii (strain WSM2304).